A 212-amino-acid polypeptide reads, in one-letter code: MSGMFITVEGPDGSGKSTQLQLLVENLKQKGYDIVVTREPGGTTVGNQIREVLLSPDHHEMTPRVEMMLYAASRAQNVEQVIRPALERGAIVLCDRFIDASIAYQGYGLQYDLDQIRSLNEWATNGLTPDLTFLFDLNPERASARMKDRGQLDRIESRDQAFHERVYAGFQTLLKQYPERIVRIDADQSIECIQDEVLDYTIERLQQGGVQK.

Gly-10 to Ser-17 contacts ATP.

Belongs to the thymidylate kinase family.

It carries out the reaction dTMP + ATP = dTDP + ADP. In terms of biological role, phosphorylation of dTMP to form dTDP in both de novo and salvage pathways of dTTP synthesis. The protein is Thymidylate kinase of Exiguobacterium sp. (strain ATCC BAA-1283 / AT1b).